The sequence spans 182 residues: Chromophore lyase CpcS/CpeS (182 aa).

This sequence belongs to the CpcS/CpeS biliprotein lyase family.

Its function is as follows. Covalently attaches a chromophore to Cys residue(s) of phycobiliproteins. This is Chromophore lyase CpcS/CpeS from Thermosynechococcus vestitus (strain NIES-2133 / IAM M-273 / BP-1).